Reading from the N-terminus, the 396-residue chain is S-adenosylmethionine synthase 1 (396 aa).

E13 is a Mg(2+) binding site. H19 lines the ATP pocket. E47 is a binding site for K(+). 2 residues coordinate L-methionine: E60 and Q103. ATP is bound by residues 171-173, 239-242, D250, 256-257, A273, K277, and K281; these read DGK, SGRF, and RK. L-methionine is bound at residue D250. Residue K281 participates in L-methionine binding.

This sequence belongs to the AdoMet synthase family. Homotetramer. It depends on Mn(2+) as a cofactor. The cofactor is Mg(2+). Requires Co(2+) as cofactor. K(+) is required as a cofactor.

The protein localises to the cytoplasm. It catalyses the reaction L-methionine + ATP + H2O = S-adenosyl-L-methionine + phosphate + diphosphate. It functions in the pathway amino-acid biosynthesis; S-adenosyl-L-methionine biosynthesis; S-adenosyl-L-methionine from L-methionine: step 1/1. Its function is as follows. Catalyzes the formation of S-adenosylmethionine from methionine and ATP. The reaction comprises two steps that are both catalyzed by the same enzyme: formation of S-adenosylmethionine (AdoMet) and triphosphate, and subsequent hydrolysis of the triphosphate. May be involved in the synthesis of betain in response to abiotic stress such as high salinity. This Beta vulgaris (Sugar beet) protein is S-adenosylmethionine synthase 1 (SAMS1).